The chain runs to 407 residues: Substance-P receptor (407 aa).

The Extracellular portion of the chain corresponds to 1–31 (MDNVLPMDSDLFPNISTNTSESNQFVQPTWQ). Asn-14 and Asn-18 each carry an N-linked (GlcNAc...) asparagine glycan. The chain crosses the membrane as a helical span at residues 32–54 (IVLWAAAYTVIVVTSVVGNVVVI). The Cytoplasmic segment spans residues 55–64 (WIILAHKRMR). The helical transmembrane segment at 65-86 (TVTNYFLVNLAFAEACMAAFNT) threads the bilayer. Topologically, residues 87–106 (VVNFTYAVHNVWYYGLFYCK) are extracellular. A disulfide bridge connects residues Cys-105 and Cys-180. Residues 107 to 128 (FHNFFPIAALFASIYSMTAVAF) form a helical membrane-spanning segment. Over 129 to 148 (DRYMAIIHPLQPRLSATATK) the chain is Cytoplasmic. The helical transmembrane segment at 149 to 169 (VVIFVIWVLALLLAFPQGYYS) threads the bilayer. Topologically, residues 170 to 194 (TTETMPSRVVCMIEWPEHPNRTYEK) are extracellular. Residues 195-219 (AYHICVTVLIYFLPLLVIGYAYTVV) form a helical membrane-spanning segment. Over 220–248 (GITLWASEIPGDSSDRYHEQVSAKRKVVK) the chain is Cytoplasmic. A helical transmembrane segment spans residues 249–270 (MMIVVVCTFAICWLPFHVFFLL). The Extracellular portion of the chain corresponds to 271 to 283 (PYINPDLYLKKFI). The helical transmembrane segment at 284–308 (QQVYLASMWLAMSSTMYNPIIYCCL) threads the bilayer. Over 309 to 407 (NDRFRLGFKH…SSSFYSNMLA (99 aa)) the chain is Cytoplasmic. Residue Cys-322 is the site of S-palmitoyl cysteine attachment. Positions 362–407 (VGAHEEEPEEGPKATPSSLDLTSNGSSRSNSKTMTESSSFYSNMLA) are disordered. Positions 376-407 (TPSSLDLTSNGSSRSNSKTMTESSSFYSNMLA) are enriched in polar residues.

This sequence belongs to the G-protein coupled receptor 1 family. In terms of assembly, interacts with ARRB1.

Its subcellular location is the cell membrane. Functionally, this is a receptor for the tachykinin neuropeptide substance P. It is probably associated with G proteins that activate a phosphatidylinositol-calcium second messenger system. The rank order of affinity of this receptor to tachykinins is: substance P &gt; substance K &gt; neuromedin-K. This is Substance-P receptor (Tacr1) from Rattus norvegicus (Rat).